We begin with the raw amino-acid sequence, 1480 residues long: Cystic fibrosis transmembrane conductance regulator (1480 aa).

The Cytoplasmic segment spans residues 1-77 (MQRSPLEKAS…KLINALRRCF (77 aa)). Residues 78-98 (FWRFMFYGIFLYLGEVTKAVQ) traverse the membrane as a helical segment. The 285-residue stretch at 81 to 365 (FMFYGIFLYL…WAVQTWYDSL (285 aa)) folds into the ABC transmembrane type-1 1 domain. Residues 99–122 (PLLLGRIIASYDPDNKEERSIAIY) lie on the Extracellular side of the membrane. Residues 123 to 146 (LGIGLCLLFIVRTLLLHPAIFGLH) form a helical membrane-spanning segment. Over 147–195 (HIGMQMRIAMFSLIYKKTLKLSSRVLDKISIGQLVSLLSNNLNKFDEGL) the chain is Cytoplasmic. A helical membrane pass occupies residues 196-216 (ALAHFVWIAPLQVALLMGLIW). Residues 217-222 (ELLQAS) lie on the Extracellular side of the membrane. The helical transmembrane segment at 223–243 (AFCGLGFLIVLALFQAGLGRM) threads the bilayer. Topologically, residues 244-298 (MMKYRDQRAGKISERLVITSEMIENIQSVKAYCWEEAMEKMIENLRQTELKLTRK) are cytoplasmic. Residues 299 to 319 (AAYVRYFNSSAFFFSGFFVVF) form a helical membrane-spanning segment. The Extracellular portion of the chain corresponds to 320 to 339 (LSVLPYALIKGIVLRKIFTT). The chain crosses the membrane as a helical span at residues 340–358 (ISFCIVLRMAVTRQFPWAV). Residues 359–858 (QTWYDSLGAI…YLRYITVHKS (500 aa)) are Cytoplasmic-facing. ATP contacts are provided by residues W401, S434, 458–465 (GSTGAGKT), and Q493. Residues 423 to 646 (NGDDSLFFSN…RPDFSSKLMG (224 aa)) form the ABC transporter 1 domain. A lipid anchor (S-palmitoyl cysteine) is attached at C524. 2 positions are modified to phosphoserine: S549 and S660. Residues 654 to 831 (SAERRNSILT…EEINEEDLKE (178 aa)) are disordered R region. S670 carries the phosphoserine; by PKA modification. Position 686 is a phosphoserine (S686). A Glycyl lysine isopeptide (Lys-Gly) (interchain with G-Cter in ubiquitin) cross-link involves residue K688. Phosphoserine is present on residues S700 and S712. T717 is modified (phosphothreonine). 6 positions are modified to phosphoserine: S737, S753, S768, S790, S795, and S813. The chain crosses the membrane as a helical span at residues 859-879 (LIFVLIWCLVIFLAEVAASLV). An ABC transmembrane type-1 2 domain is found at 859-1155 (LIFVLIWCLV…AVNSSIDVDS (297 aa)). At 880–918 (VLWLLGNTPLQDKGNSTHSRNNSYAVIITSTSSYYVFYI) the chain is on the extracellular side. N-linked (GlcNAc...) asparagine glycosylation is found at N894 and N900. Residues 919 to 939 (YVGVADTLLAMGFFRGLPLVH) form a discontinuously helical membrane-spanning segment. At 940–990 (TLITVSKILHHKMLHSVLQAPMSTLNTLKAGGILNRFSKDIAILDDLLPLT) the chain is on the cytoplasmic side. Residues 991–1011 (IFDFIQLLLIVIGAIAVVAVL) traverse the membrane as a helical segment. Over 1012–1013 (QP) the chain is Extracellular. A helical membrane pass occupies residues 1014 to 1034 (YIFVATVPVIVAFIMLRAYFL). The Cytoplasmic portion of the chain corresponds to 1035–1095 (QTSQQLKQLE…TANWFLYLST (61 aa)). A helical transmembrane segment spans residues 1096–1116 (LRWFQMRIEMIFVMFFIAVTF). Residues 1117–1130 (ISILTTGEGEGRIG) are Extracellular-facing. Residues 1131–1151 (IILTLAMNIMSTLQWAVNSSI) form a helical membrane-spanning segment. The Cytoplasmic portion of the chain corresponds to 1152–1480 (DVDSLMRSVS…TEEEVQDTRL (329 aa)). The region spanning 1210-1443 (MTVKDLSAKY…RSLFRQAISP (234 aa)) is the ABC transporter 2 domain. ATP-binding positions include Y1219 and 1244-1251 (GRTGSGKS). The tract at residues 1386-1480 (RTLKQAFADC…TEEEVQDTRL (95 aa)) is interaction with GORASP2. C1395 carries S-palmitoyl cysteine lipidation. S1444 and S1456 each carry phosphoserine. Residues 1451–1480 (PHRNSSKGKSQPQIAALKEETEEEVQDTRL) are disordered. Residues 1470–1480 (ETEEEVQDTRL) show a composition bias toward acidic residues. The short motif at 1478–1480 (TRL) is the PDZ-binding element.

It belongs to the ABC transporter superfamily. ABCC family. CFTR transporter (TC 3.A.1.202) subfamily. As to quaternary structure, monomer; does not require oligomerization for channel activity. May form oligomers in the membrane. Interacts with SLC26A3, SLC26A6 and NHERF1. Interacts with SHANK2. Interacts with MYO6. Interacts (via C-terminus) with GOPC (via PDZ domain); this promotes CFTR internalization and thereby decreases channel activity. Interacts with SLC4A7 through NHERF1. Found in a complex with MYO5B and RAB11A. Interacts with ANO1. Interacts with SLC26A8. Interacts with AHCYL1; the interaction increases CFTR activity. Interacts with CSE1L. The core-glycosylated form interacts with GORASP2 (via PDZ GRASP-type 1 domain) in respone to ER stress. Interacts with MARCHF2; the interaction leads to CFTR ubiqtuitination and degradation. Interacts with ADGRG2. In terms of processing, N-glycosylated. Phosphorylated; cAMP treatment promotes phosphorylation and activates the channel. Dephosphorylation decreases the ATPase activity (in vitro). Phosphorylation at PKA sites activates the channel. Phosphorylation at PKC sites enhances the response to phosphorylation by PKA. Phosphorylated by AMPK; this inhibits channel activity. Post-translationally, ubiquitinated, leading to its degradation in the lysosome. Deubiquitination by USP10 in early endosomes enhances its endocytic recycling to the cell membrane. Ubiquitinated by RNF185 during ER stress. Ubiquitinated by MARCHF2.

It is found in the apical cell membrane. It localises to the early endosome membrane. Its subcellular location is the cell membrane. The protein localises to the recycling endosome membrane. The protein resides in the endoplasmic reticulum membrane. It is found in the nucleus. The enzyme catalyses ATP + H2O + closed Cl(-) channel = ADP + phosphate + open Cl(-) channel.. It catalyses the reaction chloride(in) = chloride(out). The catalysed reaction is hydrogencarbonate(in) = hydrogencarbonate(out). It carries out the reaction ATP + H2O = ADP + phosphate + H(+). In terms of biological role, epithelial ion channel that plays an important role in the regulation of epithelial ion and water transport and fluid homeostasis. Mediates the transport of chloride ions across the cell membrane. Possesses an intrinsic ATPase activity and utilizes ATP to gate its channel; the passive flow of anions through the channel is gated by cycles of ATP binding and hydrolysis by the ATP-binding domains. The ion channel is also permeable to HCO(3)(-); selectivity depends on the extracellular chloride concentration. Exerts its function also by modulating the activity of other ion channels and transporters. Contributes to the regulation of the pH and the ion content of the epithelial fluid layer. Modulates the activity of the epithelial sodium channel (ENaC) complex, in part by regulating the cell surface expression of the ENaC complex. May regulate bicarbonate secretion and salvage in epithelial cells by regulating the transporter SLC4A7. Can inhibit the chloride channel activity of ANO1. Plays a role in the chloride and bicarbonate homeostasis during sperm epididymal maturation and capacitation. In Nomascus leucogenys (Northern white-cheeked gibbon), this protein is Cystic fibrosis transmembrane conductance regulator.